The following is a 246-amino-acid chain: UPF0246 protein str1967 (246 aa).

The protein belongs to the UPF0246 family.

The protein is UPF0246 protein str1967 of Streptococcus thermophilus (strain CNRZ 1066).